The following is an 85-amino-acid chain: Putative membrane protein insertion efficiency factor (85 aa).

Belongs to the UPF0161 family.

The protein localises to the cell inner membrane. Its function is as follows. Could be involved in insertion of integral membrane proteins into the membrane. In Shewanella sediminis (strain HAW-EB3), this protein is Putative membrane protein insertion efficiency factor.